A 1938-amino-acid chain; its full sequence is Myosin-4 (1938 aa).

The Myosin N-terminal SH3-like domain maps to 33–82 (DAKSSVFVADPKESFVKATVQSREGGKVTAKTEAGATVTVKEDQVFPMNP). S36 is modified (phosphoserine). Phosphothreonine is present on residues T64 and T69. Residues 86–781 (DKIEDMAMMT…LLGLLEEMRD (696 aa)) form the Myosin motor domain. Residue 179-186 (GESGAGKT) coordinates ATP. Phosphotyrosine is present on Y389. A Phosphoserine modification is found at S392. T419 is modified (phosphothreonine). Y424 carries the phosphotyrosine modification. Positions 658 to 680 (LNKLMTNLRSTHPHFVRCIIPNE) are actin-binding. The residue at position 756 (H756) is a Pros-methylhistidine. The segment at 760–774 (KFGHTKVFFKAGLLG) is actin-binding. An IQ domain is found at 784–813 (LAQLITRTQAMCRGFLARVEYKKMVERRES). Positions 845–1926 (SAETEKEMAN…ESQVNKLRVK (1082 aa)) form a coiled coil. Residues S1091, S1095, S1161, and S1236 each carry the phosphoserine modification. T1240 is subject to Phosphothreonine. Residue S1242 is modified to Phosphoserine. T1254 bears the Phosphothreonine mark. S1260 is subject to Phosphoserine. Position 1264 is a phosphothreonine (T1264). S1277 is modified (phosphoserine). A Phosphothreonine modification is found at T1285. Phosphoserine is present on residues S1287, S1291, S1302, and S1305. Residue Y1463 is modified to Phosphotyrosine. The residue at position 1466 (T1466) is a Phosphothreonine. Position 1473 is a phosphoserine (S1473). At Y1491 the chain carries Phosphotyrosine. S1494 bears the Phosphoserine mark. Phosphothreonine is present on T1500. S1513 is modified (phosphoserine). T1516 carries the phosphothreonine modification. Phosphoserine is present on residues S1541, S1553, S1573, S1599, S1602, S1713, and S1725. Phosphothreonine occurs at positions 1729 and 1735. Position 1738 is a phosphoserine (S1738).

The protein belongs to the TRAFAC class myosin-kinesin ATPase superfamily. Myosin family. Muscle myosin is a hexameric protein that consists of 2 heavy chain subunits (MHC), 2 alkali light chain subunits (MLC) and 2 regulatory light chain subunits (MLC-2).

Its subcellular location is the cytoplasm. It localises to the myofibril. Functionally, muscle contraction. The polypeptide is Myosin-4 (MYH4) (Oryctolagus cuniculus (Rabbit)).